Here is a 464-residue protein sequence, read N- to C-terminus: Properdin (464 aa).

An N-terminal signal peptide occupies residues 1-22; sequence MPAEMQAPQWLLLLLVILPATG. TSP type-1 domains lie at 24–72, 73–130, 132–187, 189–251, 253–309, 311–372, and 374–457; these read DPVL…QACR, SPQW…PCCP, MGGW…KTCP, HGAW…PPCP, AGGW…VPCP, NGEW…HNCI, and KGSW…PVCK. 3 disulfide bridges follow: C28–C52, C39–C68, and C53–C71. 2 C-linked (Man) tryptophan glycosylation sites follow: W79 and W82. Disulfide bonds link C85–C123, C89–C129, C100–C107, C128–C166, C144–C180, C148–C186, and C159–C170. C-linked (Man) tryptophan glycosylation is found at W135, W138, and W141. A glycan (O-linked (Fuc...) threonine) is linked at T147. Residues W192, W195, and W198 are each glycosylated (C-linked (Man) tryptophan). Cystine bridges form between C201-C244, C205-C250, and C220-C234. S204 carries an O-linked (Fuc...) serine glycan. C-linked (Man) tryptophan glycosylation is found at W256 and W259. 3 disulfides stabilise this stretch: C265–C302, C269–C308, and C280–C292. T268 carries an O-linked (Fuc...) threonine glycan. 2 C-linked (Man) tryptophan glycosylation sites follow: W317 and W320. Cystine bridges form between C323–C365, C332–C371, and C345–C355. The interaction with Complement C3 beta chain stretch occupies residues 346 to 354; the sequence is GGRKFNGKP. W377, W380, and W383 each carry a C-linked (Man) tryptophan glycan. 3 disulfide bridges follow: C386–C450, C390–C456, and C402–C434. A glycan (N-linked (GlcNAc...) asparagine) is linked at N423.

In terms of assembly, in plasma, properdin exists as dimers, trimers or tetramers in the relative proportions of 26:54:20. Interacts with the pro-C3-convertase enzyme complex (C3b-Bb) comprised of Complement C3 beta chain (C3b) and the Complement factor B Bb fragment (Bb), where it binds (via its TSP type-1 5 domain) with C3b and Bb. This interaction stabilizes the complex and allows it to become the active C3-convertase enzyme complex (C3b-Bb-FP). Interacts with C3b. Interacts with CFB.

It localises to the secreted. A positive regulator of the alternate pathway of complement. It binds to and stabilizes the C3- and C5-convertase enzyme complexes. Inhibits CFI-CFH mediated degradation of Inhibits CFI-CFH mediated degradation of Complement C3 beta chain (C3b). This chain is Properdin (Cfp), found in Mus musculus (Mouse).